The sequence spans 229 residues: Heptaprenylglyceryl phosphate synthase (229 aa).

Lysine 12 contributes to the sn-glycerol 1-phosphate binding site. Positions 14 and 40 each coordinate Mg(2+). Sn-glycerol 1-phosphate-binding positions include 159–164 (YLEYSG), glycine 189, and 209–210 (GN).

Belongs to the GGGP/HepGP synthase family. Group I subfamily. As to quaternary structure, homodimer. It depends on Mg(2+) as a cofactor.

The catalysed reaction is sn-glycerol 1-phosphate + all-trans-heptaprenyl diphosphate = 3-heptaprenyl-sn-glycero-1-phosphate + diphosphate. It functions in the pathway membrane lipid metabolism; glycerophospholipid metabolism. Functionally, prenyltransferase that catalyzes in vivo the transfer of the heptaprenyl moiety of heptaprenyl pyrophosphate (HepPP; 35 carbon atoms) to the C3 hydroxyl of sn-glycerol-1-phosphate (G1P), producing heptaprenylglyceryl phosphate (HepGP). This reaction is an ether-bond-formation step in the biosynthesis of archaea-type G1P-based membrane lipids found in Bacillales. This is Heptaprenylglyceryl phosphate synthase from Bacillus velezensis (strain DSM 23117 / BGSC 10A6 / LMG 26770 / FZB42) (Bacillus amyloliquefaciens subsp. plantarum).